We begin with the raw amino-acid sequence, 334 residues long: F420-dependent glucose-6-phosphate dehydrogenase (334 aa).

Aspartate 38 is a coenzyme F420-(gamma-Glu)n binding site. Histidine 39 functions as the Proton donor in the catalytic mechanism. Residues threonine 75 and 106–107 (TG) contribute to the coenzyme F420-(gamma-Glu)n site. Glutamate 108 acts as the Proton acceptor in catalysis. Coenzyme F420-(gamma-Glu)n contacts are provided by residues asparagine 111, 175–176 (GG), and 178–179 (LV). Substrate contacts are provided by threonine 193, lysine 196, lysine 257, and arginine 281.

The protein belongs to the F420-dependent glucose-6-phosphate dehydrogenase family. Homodimer.

It catalyses the reaction oxidized coenzyme F420-(gamma-L-Glu)(n) + D-glucose 6-phosphate + H(+) = 6-phospho-D-glucono-1,5-lactone + reduced coenzyme F420-(gamma-L-Glu)(n). In terms of biological role, catalyzes the coenzyme F420-dependent oxidation of glucose 6-phosphate (G6P) to 6-phosphogluconolactone. The polypeptide is F420-dependent glucose-6-phosphate dehydrogenase (Kribbella flavida (strain DSM 17836 / JCM 10339 / NBRC 14399)).